The chain runs to 447 residues: Trigger factor (447 aa).

A PPIase FKBP-type domain is found at 159 to 244 (GDMLLMQVES…VREIKEEKLP (86 aa)).

This sequence belongs to the FKBP-type PPIase family. Tig subfamily.

The protein resides in the cytoplasm. The enzyme catalyses [protein]-peptidylproline (omega=180) = [protein]-peptidylproline (omega=0). Involved in protein export. Acts as a chaperone by maintaining the newly synthesized protein in an open conformation. Functions as a peptidyl-prolyl cis-trans isomerase. The sequence is that of Trigger factor from Dehalococcoides mccartyi (strain CBDB1).